We begin with the raw amino-acid sequence, 394 residues long: WAT1-related protein At2g40900 (394 aa).

A run of 10 helical transmembrane segments spans residues 13–33, 40–60, 67–87, 102–122, 142–162, 180–200, 209–229, 245–265, 273–293, and 298–318; these read FAMVCLQFGYAGMNLVTKTVL, YVLVAYRNAFATAAIAPFALL, SKMTFPIFMRIFLLALLGPVI, TFSSAVSNIVPAITIILATLF, LVTVVGSILMIFYKGPFINFF, AAVFLLLASLSWASFFVLQAA, LSMSTMVCFMGTLQSLALAFV, LLASAYAGIMSSSIAYYVQGL, VFVTAFNPLIVVIVSIMSFFV, and IYLGGVIGVVVLMVGVYAVLW. EamA domains lie at 22–147 and 189–317; these read YAGM…TVVG and LSWA…YAVL.

The protein belongs to the drug/metabolite transporter (DMT) superfamily. Plant drug/metabolite exporter (P-DME) (TC 2.A.7.4) family.

Its subcellular location is the membrane. This is WAT1-related protein At2g40900 from Arabidopsis thaliana (Mouse-ear cress).